A 692-amino-acid chain; its full sequence is UvrABC system protein B (692 aa).

The Helicase ATP-binding domain occupies 32–418; that stretch reads DNIENGEKAQ…QTDTIVEQII (387 aa). ATP is bound at residue 45 to 52; that stretch reads GATGTGKT. Positions 98–121 match the Beta-hairpin motif; the sequence is YYDYYQPEAYVPSSDTYIEKDSSV. The region spanning 436 to 631 is the Helicase C-terminal domain; it reads QIDDLVGEIH…TIKKEIRDLI (196 aa). The region spanning 656–691 is the UVR domain; that stretch reads KALVKKLEKEMQQAASALDFEGAAQLRDMVLELRAM.

Belongs to the UvrB family. Forms a heterotetramer with UvrA during the search for lesions. Interacts with UvrC in an incision complex.

The protein localises to the cytoplasm. Its function is as follows. The UvrABC repair system catalyzes the recognition and processing of DNA lesions. A damage recognition complex composed of 2 UvrA and 2 UvrB subunits scans DNA for abnormalities. Upon binding of the UvrA(2)B(2) complex to a putative damaged site, the DNA wraps around one UvrB monomer. DNA wrap is dependent on ATP binding by UvrB and probably causes local melting of the DNA helix, facilitating insertion of UvrB beta-hairpin between the DNA strands. Then UvrB probes one DNA strand for the presence of a lesion. If a lesion is found the UvrA subunits dissociate and the UvrB-DNA preincision complex is formed. This complex is subsequently bound by UvrC and the second UvrB is released. If no lesion is found, the DNA wraps around the other UvrB subunit that will check the other stand for damage. This chain is UvrABC system protein B, found in Lactococcus lactis subsp. lactis (strain IL1403) (Streptococcus lactis).